We begin with the raw amino-acid sequence, 313 residues long: N-acetyl-gamma-glutamyl-phosphate reductase (313 aa).

Cys-117 is a catalytic residue.

The protein belongs to the NAGSA dehydrogenase family. Type 2 subfamily.

It localises to the cytoplasm. It catalyses the reaction N-acetyl-L-glutamate 5-semialdehyde + phosphate + NADP(+) = N-acetyl-L-glutamyl 5-phosphate + NADPH + H(+). Its pathway is amino-acid biosynthesis; L-arginine biosynthesis; N(2)-acetyl-L-ornithine from L-glutamate: step 3/4. Catalyzes the NADPH-dependent reduction of N-acetyl-5-glutamyl phosphate to yield N-acetyl-L-glutamate 5-semialdehyde. The polypeptide is N-acetyl-gamma-glutamyl-phosphate reductase (Burkholderia orbicola (strain MC0-3)).